The following is a 450-amino-acid chain: tRNA-2-methylthio-N(6)-dimethylallyladenosine synthase (450 aa).

The MTTase N-terminal domain maps to 14 to 132 (GEFFIETWGC…FPNYLNEVKK (119 aa)). Positions 23, 59, 93, 169, 173, and 176 each coordinate [4Fe-4S] cluster. In terms of domain architecture, Radical SAM core spans 155 to 385 (RKNSMKAFVT…VEVVNEISAK (231 aa)). In terms of domain architecture, TRAM spans 388–450 (KAYEGKIEEV…NSFSLTGEEI (63 aa)).

It belongs to the methylthiotransferase family. MiaB subfamily. Monomer. It depends on [4Fe-4S] cluster as a cofactor.

Its subcellular location is the cytoplasm. It carries out the reaction N(6)-dimethylallyladenosine(37) in tRNA + (sulfur carrier)-SH + AH2 + 2 S-adenosyl-L-methionine = 2-methylsulfanyl-N(6)-dimethylallyladenosine(37) in tRNA + (sulfur carrier)-H + 5'-deoxyadenosine + L-methionine + A + S-adenosyl-L-homocysteine + 2 H(+). Functionally, catalyzes the methylthiolation of N6-(dimethylallyl)adenosine (i(6)A), leading to the formation of 2-methylthio-N6-(dimethylallyl)adenosine (ms(2)i(6)A) at position 37 in tRNAs that read codons beginning with uridine. The polypeptide is tRNA-2-methylthio-N(6)-dimethylallyladenosine synthase (Clostridium botulinum (strain Loch Maree / Type A3)).